Consider the following 157-residue polypeptide: SsrA-binding protein (157 aa).

The disordered stretch occupies residues 133–157; sequence LHDKRETAKERDWQRDKARLMRDKG. Basic and acidic residues predominate over residues 135-157; it reads DKRETAKERDWQRDKARLMRDKG.

Belongs to the SmpB family.

It is found in the cytoplasm. Required for rescue of stalled ribosomes mediated by trans-translation. Binds to transfer-messenger RNA (tmRNA), required for stable association of tmRNA with ribosomes. tmRNA and SmpB together mimic tRNA shape, replacing the anticodon stem-loop with SmpB. tmRNA is encoded by the ssrA gene; the 2 termini fold to resemble tRNA(Ala) and it encodes a 'tag peptide', a short internal open reading frame. During trans-translation Ala-aminoacylated tmRNA acts like a tRNA, entering the A-site of stalled ribosomes, displacing the stalled mRNA. The ribosome then switches to translate the ORF on the tmRNA; the nascent peptide is terminated with the 'tag peptide' encoded by the tmRNA and targeted for degradation. The ribosome is freed to recommence translation, which seems to be the essential function of trans-translation. This is SsrA-binding protein from Methylobacterium sp. (strain 4-46).